The chain runs to 513 residues: 2,3-bisphosphoglycerate-independent phosphoglycerate mutase (513 aa).

The Mn(2+) site is built by Asp13 and Ser63. Ser63 functions as the Phosphoserine intermediate in the catalytic mechanism. Substrate contacts are provided by residues His124, 154–155 (RD), Arg186, Arg192, 262–265 (RADR), and Lys335. The Mn(2+) site is built by Asp402, His406, Asp443, His444, and His462.

Belongs to the BPG-independent phosphoglycerate mutase family. Monomer. The cofactor is Mn(2+).

It catalyses the reaction (2R)-2-phosphoglycerate = (2R)-3-phosphoglycerate. It participates in carbohydrate degradation; glycolysis; pyruvate from D-glyceraldehyde 3-phosphate: step 3/5. In terms of biological role, catalyzes the interconversion of 2-phosphoglycerate and 3-phosphoglycerate. The sequence is that of 2,3-bisphosphoglycerate-independent phosphoglycerate mutase from Shewanella amazonensis (strain ATCC BAA-1098 / SB2B).